The primary structure comprises 125 residues: Large ribosomal subunit protein bL12 (125 aa).

Belongs to the bacterial ribosomal protein bL12 family. Homodimer. Part of the ribosomal stalk of the 50S ribosomal subunit. Forms a multimeric L10(L12)X complex, where L10 forms an elongated spine to which 2 to 4 L12 dimers bind in a sequential fashion. Binds GTP-bound translation factors.

Forms part of the ribosomal stalk which helps the ribosome interact with GTP-bound translation factors. Is thus essential for accurate translation. The sequence is that of Large ribosomal subunit protein bL12 from Campylobacter lari (strain RM2100 / D67 / ATCC BAA-1060).